A 377-amino-acid chain; its full sequence is Alanine racemase (377 aa).

Lysine 33 functions as the Proton acceptor; specific for D-alanine in the catalytic mechanism. Lysine 33 bears the N6-(pyridoxal phosphate)lysine mark. Arginine 134 is a substrate binding site. Catalysis depends on tyrosine 267, which acts as the Proton acceptor; specific for L-alanine. Methionine 315 contributes to the substrate binding site.

Belongs to the alanine racemase family. It depends on pyridoxal 5'-phosphate as a cofactor.

The catalysed reaction is L-alanine = D-alanine. The protein operates within amino-acid biosynthesis; D-alanine biosynthesis; D-alanine from L-alanine: step 1/1. Catalyzes the interconversion of L-alanine and D-alanine. May also act on other amino acids. This is Alanine racemase (alr) from Treponema pallidum subsp. pallidum (strain SS14).